An 859-amino-acid polypeptide reads, in one-letter code: Mycobactin import ATP-binding/permease protein IrtA (859 aa).

At Met1–Pro292 the chain is on the cytoplasmic side. The region spanning Ala15 to Asp122 is the FAD-binding FR-type domain. FAD-binding positions include Arg70–Thr73, Asp87–His91, and Ala97–Ser98. Positions His247–Ser267 are disordered. A helical membrane pass occupies residues Leu293 to Leu313. The ABC transmembrane type-1 domain occupies Leu293–Thr575. At Leu314–Gly334 the chain is on the periplasmic side. Residues Phe335–Leu355 traverse the membrane as a helical segment. The Cytoplasmic portion of the chain corresponds to His356–Ala408. Residues Val409–Val429 form a helical membrane-spanning segment. Topologically, residues Asp430–Arg432 are periplasmic. Residues Val433–Ile453 form a helical membrane-spanning segment. Residues Gln454–Asp519 lie on the Cytoplasmic side of the membrane. The chain crosses the membrane as a helical span at residues Leu520–Ala540. At Thr541–Asn548 the chain is on the periplasmic side. The helical transmembrane segment at Leu549–Gly569 threads the bilayer. At Leu570–Arg859 the chain is on the cytoplasmic side. The ABC transporter domain occupies Val610–Thr843. Position 643–650 (Gly643–Ser650) interacts with ATP.

It belongs to the ABC transporter superfamily. Siderophore-Fe(3+) uptake transporter (SIUT) (TC 3.A.1.21) family. As to quaternary structure, forms a heterodimer with IrtB. Requires FAD as cofactor.

The protein resides in the cell inner membrane. Part of the ABC transporter complex IrtAB involved in the import of iron-bound mycobactin (Fe-MBT) and carboxymycobactin (Fe-cMBT). Mycobactins are then reduced by the siderophore interaction domain to facilitate iron release in the bacterial cell. Transmembrane domains (TMD) form a pore in the membrane and the ATP-binding domain (NBD) is responsible for energy generation. Required for replication in human macrophages and in mouse lungs. The sequence is that of Mycobactin import ATP-binding/permease protein IrtA (irtA) from Mycobacterium tuberculosis (strain ATCC 25618 / H37Rv).